Here is a 372-residue protein sequence, read N- to C-terminus: Pre-small/secreted glycoprotein (372 aa).

The first 32 residues, 1 to 32 (MEGLSLLQLPRDKFRKSSFFVWVIILFQKAFS), serve as a signal peptide directing secretion. N40 carries N-linked (GlcNAc...) asparagine; by host glycosylation. 2 cysteine pairs are disulfide-bonded: C108–C135 and C121–C147. N-linked (GlcNAc...) asparagine; by host glycans are attached at residues N204, N208, N238, N257, and N268. The tract at residues 320–340 (MRHRRELQREESPTGPPGSIR) is disordered.

Belongs to the filoviruses glycoprotein family. As to quaternary structure, homodimer; disulfide-linked. The homodimers are linked by two disulfide bonds in a parallel orientation. Monomer. In terms of processing, this precursor is processed into mature sGP and delta-peptide by host furin or furin-like proteases. The cleavage site corresponds to the furin optimal cleavage sequence [KR]-X-[KR]-R. Post-translationally, N-glycosylated. O-glycosylated.

The protein localises to the secreted. In terms of biological role, seems to possess an anti-inflammatory activity as it can reverse the barrier-decreasing effects of TNF alpha. Might therefore contribute to the lack of inflammatory reaction seen during infection in spite the of extensive necrosis and massive virus production. Does not seem to be involved in activation of primary macrophages. Does not seem to interact specifically with neutrophils. Functionally, viroporin that permeabilizes mammalian cell plasma membranes. It acts by altering permeation of ionic compounds and small molecules. This activity may lead to viral enterotoxic activity. This Sudan ebolavirus (strain Boniface-76) (SEBOV) protein is Pre-small/secreted glycoprotein (GP).